The sequence spans 430 residues: Histidine--tRNA ligase (430 aa).

The protein belongs to the class-II aminoacyl-tRNA synthetase family. In terms of assembly, homodimer.

It is found in the cytoplasm. It catalyses the reaction tRNA(His) + L-histidine + ATP = L-histidyl-tRNA(His) + AMP + diphosphate + H(+). The protein is Histidine--tRNA ligase of Chlorobium limicola (strain DSM 245 / NBRC 103803 / 6330).